Reading from the N-terminus, the 276-residue chain is NADPH-dependent 7-cyano-7-deazaguanine reductase (276 aa).

Position 83 to 85 (83 to 85 (IES)) interacts with substrate. An NADPH-binding site is contributed by 85 to 86 (SK). C184 serves as the catalytic Thioimide intermediate. The Proton donor role is filled by D191. A substrate-binding site is contributed by 223–224 (HE). 252–253 (RG) lines the NADPH pocket.

It belongs to the GTP cyclohydrolase I family. QueF type 2 subfamily. As to quaternary structure, homodimer.

Its subcellular location is the cytoplasm. The enzyme catalyses 7-aminomethyl-7-carbaguanine + 2 NADP(+) = 7-cyano-7-deazaguanine + 2 NADPH + 3 H(+). It participates in tRNA modification; tRNA-queuosine biosynthesis. Its function is as follows. Catalyzes the NADPH-dependent reduction of 7-cyano-7-deazaguanine (preQ0) to 7-aminomethyl-7-deazaguanine (preQ1). The sequence is that of NADPH-dependent 7-cyano-7-deazaguanine reductase from Pseudomonas putida (strain ATCC 700007 / DSM 6899 / JCM 31910 / BCRC 17059 / LMG 24140 / F1).